The sequence spans 293 residues: Probable rRNA-processing protein EBP2 homolog (293 aa).

The span at 1 to 37 (MSLEEDIVSDDEMNMIDEDDATDSEAESLSDSDTENE) shows a compositional bias: acidic residues. Disordered stretches follow at residues 1–45 (MSLE…LAEP) and 150–293 (IEES…RQKR). Residues 135 to 190 (HMEKVKSRLLHEKKQIEESEERRKARDNKRMAKEVQSQKMKERAKEKKDNIESVKK) are a coiled coil. Composition is skewed to basic and acidic residues over residues 150–167 (IEES…RMAK), 173–189 (KMKE…ESVK), and 247–256 (KKREFRDSKF). Polar residues predominate over residues 265–275 (SKQNTAETTND).

It belongs to the EBP2 family. In terms of assembly, interacts with NSN1.

Its subcellular location is the nucleus. It localises to the nucleolus. Its function is as follows. Required for the processing of the 27S pre-rRNA. Plays an important role in plant growth and senescence by modulating ribosome biogenesis in nucleolus. Associates with ribosomes. This chain is Probable rRNA-processing protein EBP2 homolog, found in Arabidopsis thaliana (Mouse-ear cress).